The chain runs to 470 residues: UDP-glycosyltransferase 75C1 (470 aa).

Histidine 16 (proton acceptor) is an active-site residue. An anthocyanidin is bound at residue histidine 16. UDP-alpha-D-glucose is bound by residues glutamine 347, histidine 362, tryptophan 365, asparagine 366, serine 367, glutamate 370, aspartate 386, and glutamine 387.

The protein belongs to the UDP-glycosyltransferase family. Expressed in flowers and fruits, especially in pulp, and, at lower levels, in seeds.

The protein localises to the cytoplasm. It localises to the nucleus. It catalyses the reaction 2-cis-(+)-abscisate + UDP-alpha-D-glucose = beta-D-glucopyranosyl cis-(+)-abscisate + UDP. The enzyme catalyses (indol-3-yl)acetate + UDP-alpha-D-glucose = 1-O-(indol-3-ylacetyl)-beta-D-glucose + UDP. Glucosyltransferase acting on both abscisic acid (ABA) and auxin (IAA). Required for ABA-mediated fruit ripening, seed germination, and negative responses to drought. This Solanum lycopersicum (Tomato) protein is UDP-glycosyltransferase 75C1.